The sequence spans 141 residues: Alpha-lactalbumin (141 aa).

An N-terminal signal peptide occupies residues 1–19; that stretch reads MMPLVPLLLVSIVFPGIQA. Residues 20-141 enclose the C-type lysozyme domain; the sequence is TQLTRCELTE…ENLEQWVCKK (122 aa). 4 disulfide bridges follow: C25/C139, C47/C130, C80/C96, and C92/C110. The N-linked (GlcNAc...) asparagine glycan is linked to N64. Residues D101, D106, and D107 each coordinate Ca(2+).

It belongs to the glycosyl hydrolase 22 family. In terms of assembly, lactose synthase (LS) is a heterodimer of a catalytic component, beta1,4-galactosyltransferase (beta4Gal-T1) and a regulatory component, alpha-lactalbumin (LA). Mammary gland specific. Secreted in milk.

The protein resides in the secreted. In terms of biological role, regulatory subunit of lactose synthase, changes the substrate specificity of galactosyltransferase in the mammary gland making glucose a good acceptor substrate for this enzyme. This enables LS to synthesize lactose, the major carbohydrate component of milk. In other tissues, galactosyltransferase transfers galactose onto the N-acetylglucosamine of the oligosaccharide chains in glycoproteins. The sequence is that of Alpha-lactalbumin (LALBA) from Oryctolagus cuniculus (Rabbit).